A 559-amino-acid polypeptide reads, in one-letter code: uncharacterized protein (559 aa).

The segment covering 1-10 (MSGRRGDHPG) has biased composition (basic and acidic residues). A disordered region spans residues 1 to 76 (MSGRRGDHPG…ERSRVPPRTT (76 aa)). 11 helical membrane passes run 128–148 (FAVDSAMAVALANTLFFAAAS), 155–175 (VALYLLITIAPFAVIAPLIGP), 186–206 (VALALSFGLRTALAVVLIMNY), 208–228 (GATGSFPSWVLYPCALAMMVF), 259–279 (VFGLLGGTIAGGAIAAGVEFV), 283–303 (LFQLPGALFVVVAITIAGASL), 358–378 (LWGNCTIKVMVGFLFLYPAFV), 387–407 (WVQLGMLGLIGAAAAVGNFAG), 428–448 (VLVTVLAIAAAVAGSLAATAI), 490–510 (LAWVLGGAVGVLVYTELWVGF), and 515–535 (ALLILGLAQTIVSFRGDSLIP).

To M.leprae ML2143.

Its subcellular location is the cell membrane. This is an uncharacterized protein from Mycobacterium tuberculosis (strain CDC 1551 / Oshkosh).